Reading from the N-terminus, the 374-residue chain is MQQKCYYEILNVSKTASGVEIKRAYRKLAMEYHPDRNPGDKEAEIKFKEISEAYEILSDDSKRSRYDQFGHAGVNQQSGFGGTGGFGGFEDIFDTFFGGGTSRGSNRSRASRGSDLEYTLEITLEEAFFGVEKEITIPRMESCDSCDGTGSKSRSKTTCHACHGQGTIRRQQGFFAFEQTCPVCNGTGYSITDPCDACYGNGKVKKQKTLKVKIPEGVDNGDRIRLQGEGDSGSNGAMNGDLYVQIIIKEHKIFERRDINLYCEMPISFTKACLGGDIKVPTLDGEVVLKVVPETQTGKVFRLREKGMKSLRGHRRGDLLCKVVVETPVNLSAEQKELLEKFADSLGEDYQSKHAPKSKTWFDNVKDYAKKFFE.

The J domain maps to 5–70 (CYYEILNVSK…SKRSRYDQFG (66 aa)). The CR-type zinc-finger motif lies at 130–207 (GVEKEITIPR…CYGNGKVKKQ (78 aa)). 8 residues coordinate Zn(2+): Cys143, Cys146, Cys159, Cys162, Cys181, Cys184, Cys195, and Cys198. CXXCXGXG motif repeat units lie at residues 143 to 150 (CDSCDGTG), 159 to 166 (CHACHGQG), 181 to 188 (CPVCNGTG), and 195 to 202 (CDACYGNG).

Belongs to the DnaJ family. Homodimer. Zn(2+) serves as cofactor.

The protein resides in the cytoplasm. Functionally, participates actively in the response to hyperosmotic and heat shock by preventing the aggregation of stress-denatured proteins and by disaggregating proteins, also in an autonomous, DnaK-independent fashion. Unfolded proteins bind initially to DnaJ; upon interaction with the DnaJ-bound protein, DnaK hydrolyzes its bound ATP, resulting in the formation of a stable complex. GrpE releases ADP from DnaK; ATP binding to DnaK triggers the release of the substrate protein, thus completing the reaction cycle. Several rounds of ATP-dependent interactions between DnaJ, DnaK and GrpE are required for fully efficient folding. Also involved, together with DnaK and GrpE, in the DNA replication of plasmids through activation of initiation proteins. This Francisella tularensis subsp. tularensis (strain FSC 198) protein is Chaperone protein DnaJ.